A 211-amino-acid polypeptide reads, in one-letter code: HTH-type transcriptional regulator AlkX (211 aa).

The region spanning Ala-22–Leu-82 is the HTH tetR-type domain. Positions Thr-45–Phe-64 form a DNA-binding region, H-T-H motif.

As to quaternary structure, homodimer.

It localises to the cytoplasm. DNA-binding activity may be regulated by fatty acids. Represses the expression of the alkB-rubAB operon, which encodes the alkane hydroxylase AlkB and the rubredoxins RubA and RubB. Acts by binding to the promoter region of the operon. In addition, EMSA analysis show that AlkX can bind to the promoter region of mmpS1 and mmpL3 and to the intragenic region of mmpL11, suggesting that it may participate in the regulatory network that controls the expression of MmpL lipid transporters. This Mycobacterium tuberculosis (strain ATCC 25618 / H37Rv) protein is HTH-type transcriptional regulator AlkX.